Reading from the N-terminus, the 440-residue chain is Serine/threonine-protein kinase 2 (440 aa).

In terms of domain architecture, Protein kinase spans 85–440 (NDDFYHISTG…FSNWINGESC (356 aa)). ATP contacts are provided by residues 91-99 (ISTGGYGIV) and Lys115. Asp306 acts as the Proton acceptor in catalysis.

Belongs to the protein kinase superfamily. Ser/Thr protein kinase family. Poxviruses subfamily. In terms of processing, phosphorylated in vivo. Autophosphorylated in vitro.

It localises to the host endoplasmic reticulum. It is found in the host endoplasmic reticulum-Golgi intermediate compartment. The catalysed reaction is L-seryl-[protein] + ATP = O-phospho-L-seryl-[protein] + ADP + H(+). The enzyme catalyses L-threonyl-[protein] + ATP = O-phospho-L-threonyl-[protein] + ADP + H(+). Essential serine-protein kinase involved in the early stage of virion morphogenesis. This chain is Serine/threonine-protein kinase 2 (OPG054), found in Sus scrofa (Pig).